Here is a 369-residue protein sequence, read N- to C-terminus: DNA replication and repair protein RecF (369 aa).

Position 30–37 (30–37) interacts with ATP; the sequence is GENGQGKT.

The protein belongs to the RecF family.

It is found in the cytoplasm. Functionally, the RecF protein is involved in DNA metabolism; it is required for DNA replication and normal SOS inducibility. RecF binds preferentially to single-stranded, linear DNA. It also seems to bind ATP. This is DNA replication and repair protein RecF from Anaeromyxobacter sp. (strain Fw109-5).